The following is a 208-amino-acid chain: N-(5'-phosphoribosyl)anthranilate isomerase (208 aa).

Belongs to the TrpF family.

The enzyme catalyses N-(5-phospho-beta-D-ribosyl)anthranilate = 1-(2-carboxyphenylamino)-1-deoxy-D-ribulose 5-phosphate. It participates in amino-acid biosynthesis; L-tryptophan biosynthesis; L-tryptophan from chorismate: step 3/5. This is N-(5'-phosphoribosyl)anthranilate isomerase from Nitrosospira multiformis (strain ATCC 25196 / NCIMB 11849 / C 71).